A 105-amino-acid polypeptide reads, in one-letter code: Imizoquin biosynthesis cluster protein I (105 aa).

Positions 1-15 (MSSGEPTTMTPSPSE) are enriched in polar residues. A disordered region spans residues 1-43 (MSSGEPTTMTPSPSERTPLLSNGSGGAADDGGTTVTISKPNDG).

Its pathway is secondary metabolite biosynthesis. Functionally, part of the gene cluster that mediates the biosynthesis of imizoquins A to D, tripeptide-derived alkaloids that serve a protective role against oxidative stress that are essential for normal germination. ImqB is a canonical three-module NRPS that assembles the tripeptide backbone of the imizoquins via condensation of Trp, Tyr, and Leu-derived precursors. N-methylation by imqF and phenol oxidation by imqC, followed by cyclization via the FAD-dependent oxidase imqH carry out the three-step transformation of L-tyrosine into tetrahydroisoquinoline. Importantly, this sequence requires the presence of a free amine in the tyrosine moiety, indicating that isoquinoline formation occurs prior to peptide bond formation. The imidazolidin-4-one ring of imizoquins could form following additional oxidation of the methyl-derived bridgehead carbon by imqH. Lastly, O-methylation by imqG and leucine hydroxylation by imqE complete biosynthesis of the imizoquins. This Aspergillus flavus (strain ATCC 200026 / FGSC A1120 / IAM 13836 / NRRL 3357 / JCM 12722 / SRRC 167) protein is Imizoquin biosynthesis cluster protein I.